Here is a 940-residue protein sequence, read N- to C-terminus: Isoleucine--tRNA ligase (940 aa).

Positions 58 to 68 (PYANGSIHIGH) match the 'HIGH' region motif. L-isoleucyl-5'-AMP is bound at residue glutamate 564. The short motif at 605–609 (KMSKS) is the 'KMSKS' region element. Residue lysine 608 coordinates ATP. Zn(2+) contacts are provided by cysteine 903, cysteine 906, cysteine 923, and cysteine 926.

The protein belongs to the class-I aminoacyl-tRNA synthetase family. IleS type 1 subfamily. Monomer. Zn(2+) serves as cofactor.

The protein localises to the cytoplasm. It carries out the reaction tRNA(Ile) + L-isoleucine + ATP = L-isoleucyl-tRNA(Ile) + AMP + diphosphate. Its function is as follows. Catalyzes the attachment of isoleucine to tRNA(Ile). As IleRS can inadvertently accommodate and process structurally similar amino acids such as valine, to avoid such errors it has two additional distinct tRNA(Ile)-dependent editing activities. One activity is designated as 'pretransfer' editing and involves the hydrolysis of activated Val-AMP. The other activity is designated 'posttransfer' editing and involves deacylation of mischarged Val-tRNA(Ile). The protein is Isoleucine--tRNA ligase of Shewanella baltica (strain OS185).